Reading from the N-terminus, the 449-residue chain is Kynurenine 3-monooxygenase (449 aa).

Belongs to the aromatic-ring hydroxylase family. KMO subfamily. Requires FAD as cofactor.

The enzyme catalyses L-kynurenine + NADPH + O2 + H(+) = 3-hydroxy-L-kynurenine + NADP(+) + H2O. The protein operates within cofactor biosynthesis; NAD(+) biosynthesis; quinolinate from L-kynurenine: step 1/3. Catalyzes the hydroxylation of L-kynurenine (L-Kyn) to form 3-hydroxy-L-kynurenine (L-3OHKyn). Required for synthesis of quinolinic acid. The protein is Kynurenine 3-monooxygenase of Legionella pneumophila (strain Lens).